The primary structure comprises 534 residues: Light-independent protochlorophyllide reductase subunit B (534 aa).

Residue Asp-36 participates in [4Fe-4S] cluster binding. The Proton donor role is filled by Asp-274. 409-410 (GL) serves as a coordination point for substrate. The segment at 426 to 446 (DEAGPSHHGGKAVPASAPRAD) is disordered.

The protein belongs to the ChlB/BchB/BchZ family. As to quaternary structure, protochlorophyllide reductase is composed of three subunits; BchL, BchN and BchB. Forms a heterotetramer of two BchB and two BchN subunits. The cofactor is [4Fe-4S] cluster.

The catalysed reaction is chlorophyllide a + oxidized 2[4Fe-4S]-[ferredoxin] + 2 ADP + 2 phosphate = protochlorophyllide a + reduced 2[4Fe-4S]-[ferredoxin] + 2 ATP + 2 H2O. Its pathway is porphyrin-containing compound metabolism; bacteriochlorophyll biosynthesis (light-independent). In terms of biological role, component of the dark-operative protochlorophyllide reductase (DPOR) that uses Mg-ATP and reduced ferredoxin to reduce ring D of protochlorophyllide (Pchlide) to form chlorophyllide a (Chlide). This reaction is light-independent. The NB-protein (BchN-BchB) is the catalytic component of the complex. The polypeptide is Light-independent protochlorophyllide reductase subunit B (Cereibacter sphaeroides (strain ATCC 17023 / DSM 158 / JCM 6121 / CCUG 31486 / LMG 2827 / NBRC 12203 / NCIMB 8253 / ATH 2.4.1.) (Rhodobacter sphaeroides)).